The primary structure comprises 540 residues: DM7 family protein GD24576 (540 aa).

The interval 416-443 (ATDTRGRDEIRTSCDQSQEKDEGSAEAD) is disordered. Residues 417–443 (TDTRGRDEIRTSCDQSQEKDEGSAEAD) are compositionally biased toward basic and acidic residues.

The protein belongs to the DM7 family.

The polypeptide is DM7 family protein GD24576 (Drosophila simulans (Fruit fly)).